We begin with the raw amino-acid sequence, 497 residues long: Malonate-semialdehyde dehydrogenase (497 aa).

Residues Phe148, Lys172, Glu175, Arg176, and Ser225 each coordinate NAD(+). The Nucleophile role is filled by Cys280. An NAD(+)-binding site is contributed by Glu382.

Belongs to the aldehyde dehydrogenase family.

The catalysed reaction is 3-oxopropanoate + NAD(+) + CoA + H2O = hydrogencarbonate + acetyl-CoA + NADH + H(+). Involved in the degradation of beta-alanine. Likely catalyzes the NAD(+)- and CoA-dependent oxidative decarboxylation of malonate semialdehyde (3-oxopropanoate) to acetyl-CoA. This Pseudomonas aeruginosa (strain ATCC 15692 / DSM 22644 / CIP 104116 / JCM 14847 / LMG 12228 / 1C / PRS 101 / PAO1) protein is Malonate-semialdehyde dehydrogenase.